We begin with the raw amino-acid sequence, 434 residues long: D-amino acid dehydrogenase (434 aa).

3-17 contributes to the FAD binding site; it reads VVILGSGVVGVASAW.

It belongs to the DadA oxidoreductase family. FAD serves as cofactor.

It carries out the reaction a D-alpha-amino acid + A + H2O = a 2-oxocarboxylate + AH2 + NH4(+). The protein operates within amino-acid degradation; D-alanine degradation; NH(3) and pyruvate from D-alanine: step 1/1. In terms of biological role, oxidative deamination of D-amino acids. The chain is D-amino acid dehydrogenase from Serratia proteamaculans (strain 568).